Reading from the N-terminus, the 127-residue chain is Holo-[acyl-carrier-protein] synthase (127 aa).

The Mg(2+) site is built by D9 and E58.

This sequence belongs to the P-Pant transferase superfamily. AcpS family. Mg(2+) serves as cofactor.

It localises to the cytoplasm. It catalyses the reaction apo-[ACP] + CoA = holo-[ACP] + adenosine 3',5'-bisphosphate + H(+). Its function is as follows. Transfers the 4'-phosphopantetheine moiety from coenzyme A to a Ser of acyl-carrier-protein. In Shewanella baltica (strain OS155 / ATCC BAA-1091), this protein is Holo-[acyl-carrier-protein] synthase.